The following is a 518-amino-acid chain: Receptor-interacting serine/threonine-protein kinase 3 (518 aa).

The residue at position 2 (serine 2) is a Phosphoserine. A Protein kinase domain is found at 21-287; that stretch reads LENQELVGKG…ECLPKTDEVF (267 aa). 27 to 35 is a binding site for ATP; sequence VGKGGFGTV. Residue lysine 42 forms a Glycyl lysine isopeptide (Lys-Gly) (interchain with G-Cter in ubiquitin) linkage. Residue lysine 50 participates in ATP binding. Aspartate 142 acts as the Proton acceptor in catalysis. Serine 164 carries the post-translational modification Phosphoserine. The residue at position 182 (threonine 182) is a Phosphothreonine. Serine 199 and serine 227 each carry phosphoserine; by autocatalysis. The residue at position 252 (threonine 252) is a Phosphothreonine. Serine 299 bears the Phosphoserine mark. A Phosphothreonine modification is found at threonine 333. Residues lysine 351 and lysine 363 each participate in a glycyl lysine isopeptide (Lys-Gly) (interchain with G-Cter in ubiquitin) cross-link. Positions 355 to 443 are disordered; the sequence is EEPPSSVPKK…WSCRTPEPNP (89 aa). Residues 384–408 are compositionally biased toward polar residues; sequence TAGTSSDSMAQPPQTPETSTFRNQM. Serine 389 carries the post-translational modification Phosphoserine. Threonine 401 is subject to Phosphothreonine. The RIP homotypic interaction motif (RHIM) signature appears at 450-466; it reads VNIYNCSGVQVGDNNYL. Residues 476-518 are disordered; sequence TWGLAPSGKGRGLQHPPPVGSQEGPKDPEAWSRPQGWYNHSGK. Lysine 518 is covalently cross-linked (Glycyl lysine isopeptide (Lys-Gly) (interchain with G-Cter in ubiquitin)).

The protein belongs to the protein kinase superfamily. TKL Ser/Thr protein kinase family. As to quaternary structure, interacts (via RIP homotypic interaction motif) with RIPK1 (via RIP homotypic interaction motif); this interaction induces RIPK1 phosphorylation and formation of a RIPK1-RIPK3 necrosis-inducing complex. Interacts with MLKL; the interaction is direct and triggers necroptosis. Interacts with ZBP1 (via RIP homotypic interaction motif); interaction with ZBP1 activates RIPK3, triggering necroptosis. Upon TNF-induced necrosis, the RIPK1-RIPK3 dimer further interacts with PGAM5 and MLKL; the formation of this complex leads to PGAM5 phosphorylation and increase in PGAM5 phosphatase activity. Binds TRAF2 and is recruited to the TNFR-1 signaling complex. Interacts with PYGL, GLUL and GLUD1; these interactions result in activation of these metabolic enzymes. Interacts with BIRC2/c-IAP1, BIRC3/c-IAP2 and XIAP/BIRC4. Interacts with ARHGEF2. Interacts with PELI1 (via atypical FHA domain); the phosphorylated form at Thr-182 binds preferentially to PELI1. Interacts with BUB1B, TRAF2 and STUB1. Interacts with CASP6. Component of the AIM2 PANoptosome complex, a multiprotein complex that drives inflammatory cell death (PANoptosis). In terms of assembly, (Microbial infection) Interacts (via RIP homotypic interaction motif/RHIM) with herpes simplex virus 1/HHV-1 protein RIR1/ICP6 (via RHIM); this interaction may induce heteromeric amyloid assemblies and prevent necroptosis activation. (Microbial infection) Interacts (via RIP homotypic interaction motif/RHIM) with herpes simplex virus 2/HHV-2 protein RIR1/ICP10 (via RHIM); this interaction prevents necroptosis activation. (Microbial infection) Proteolytically cleaved by S.flexneri OspD3 within the RIP homotypic interaction motif (RHIM), leading to its degradation and inhibition of necroptosis. In terms of processing, RIPK1 and RIPK3 undergo reciprocal auto- and trans-phosphorylation. Autophosphorylated following interaction with ZBP1. Phosphorylation of Ser-199 plays a role in the necroptotic function of RIPK3. Autophosphorylates at Ser-227 following activation by ZBP1: phosphorylation at these sites is a hallmark of necroptosis and is required for binding MLKL. Phosphorylation at Thr-182 is important for its kinase activity, interaction with PELI1 and PELI1-mediated 'Lys-48'-linked polyubiquitination and for its ability to mediate TNF-induced necroptosis. Post-translationally, polyubiquitinated with 'Lys-48' and 'Lys-63'-linked chains by BIRC2/c-IAP1 and BIRC3/c-IAP2, leading to activation of NF-kappa-B. Polyubiquitinated with 'Lys-48'-linked chains by PELI1 leading to its subsequent proteasome-dependent degradation. Ubiquitinated by STUB1 leading to its subsequent proteasome-dependent degradation. Deubiquitinated by USP22. As to expression, highly expressed in the pancreas. Detected at lower levels in heart, placenta, lung and kidney. In terms of tissue distribution, expression is significantly increased in colon and lung cancers.

The protein resides in the cytoplasm. Its subcellular location is the cytosol. It is found in the nucleus. The enzyme catalyses L-seryl-[protein] + ATP = O-phospho-L-seryl-[protein] + ADP + H(+). The catalysed reaction is L-threonyl-[protein] + ATP = O-phospho-L-threonyl-[protein] + ADP + H(+). Its activity is regulated as follows. Activity is stimulated by ZBP1, which senses double-stranded Z-RNA structures. RIPK3-dependent necroptosis is inhibited by RIPK1: RIPK1 prevents the ZBP1-induced activation of RIPK3 via FADD-mediated recruitment of CASP8, which cleaves RIPK1 and limits TNF-induced necroptosis. Functionally, serine/threonine-protein kinase that activates necroptosis and apoptosis, two parallel forms of cell death. Necroptosis, a programmed cell death process in response to death-inducing TNF-alpha family members, is triggered by RIPK3 following activation by ZBP1. Activated RIPK3 forms a necrosis-inducing complex and mediates phosphorylation of MLKL, promoting MLKL localization to the plasma membrane and execution of programmed necrosis characterized by calcium influx and plasma membrane damage. In addition to TNF-induced necroptosis, necroptosis can also take place in the nucleus in response to orthomyxoviruses infection: following ZBP1 activation, which senses double-stranded Z-RNA structures, nuclear RIPK3 catalyzes phosphorylation and activation of MLKL, promoting disruption of the nuclear envelope and leakage of cellular DNA into the cytosol. Also regulates apoptosis: apoptosis depends on RIPK1, FADD and CASP8, and is independent of MLKL and RIPK3 kinase activity. Phosphorylates RIPK1: RIPK1 and RIPK3 undergo reciprocal auto- and trans-phosphorylation. In some cell types, also able to restrict viral replication by promoting cell death-independent responses. In response to Zika virus infection in neurons, promotes a cell death-independent pathway that restricts viral replication: together with ZBP1, promotes a death-independent transcriptional program that modifies the cellular metabolism via up-regulation expression of the enzyme ACOD1/IRG1 and production of the metabolite itaconate. Itaconate inhibits the activity of succinate dehydrogenase, generating a metabolic state in neurons that suppresses replication of viral genomes. RIPK3 binds to and enhances the activity of three metabolic enzymes: GLUL, GLUD1, and PYGL. These metabolic enzymes may eventually stimulate the tricarboxylic acid cycle and oxidative phosphorylation, which could result in enhanced ROS production. Its function is as follows. (Microbial infection) In case of herpes simplex virus 1/HHV-1 infection, forms heteromeric amyloid structures with HHV-1 protein RIR1/ICP6 which may inhibit RIPK3-mediated necroptosis, thereby preventing host cell death pathway and allowing viral evasion. This Homo sapiens (Human) protein is Receptor-interacting serine/threonine-protein kinase 3.